Consider the following 172-residue polypeptide: RNA pyrophosphohydrolase (172 aa).

A Nudix hydrolase domain is found at 6–149; the sequence is GFRANVGIII…KRDVYRKVMK (144 aa). A Nudix box motif is present at residues 38–59; sequence GGVDEGETPEEAMFRELYEEVG.

Belongs to the Nudix hydrolase family. RppH subfamily. The cofactor is a divalent metal cation.

Its function is as follows. Accelerates the degradation of transcripts by removing pyrophosphate from the 5'-end of triphosphorylated RNA, leading to a more labile monophosphorylated state that can stimulate subsequent ribonuclease cleavage. The sequence is that of RNA pyrophosphohydrolase from Shewanella sediminis (strain HAW-EB3).